The sequence spans 62 residues: MLILTRKVGESINIGDEITVTILGVQGLQVRLGINAPKNVSVHREEIYKRIQAELAPNQDPQ.

It belongs to the CsrA/RsmA family. As to quaternary structure, homodimer; the beta-strands of each monomer intercalate to form a hydrophobic core, while the alpha-helices form wings that extend away from the core.

Its subcellular location is the cytoplasm. A key translational regulator that binds mRNA to regulate translation initiation and/or mRNA stability. Mediates global changes in gene expression, shifting from rapid growth to stress survival by linking envelope stress, the stringent response and the catabolite repression systems. Usually binds in the 5'-UTR; binding at or near the Shine-Dalgarno sequence prevents ribosome-binding, repressing translation, binding elsewhere in the 5'-UTR can activate translation and/or stabilize the mRNA. Its function is antagonized by small RNA(s). In Pseudomonas syringae pv. tomato (strain ATCC BAA-871 / DC3000), this protein is Translational regulator CsrA 3.